The sequence spans 420 residues: UDP-N-acetylglucosamine 1-carboxyvinyltransferase (420 aa).

Residue K22 to N23 participates in phosphoenolpyruvate binding. Residue R92 participates in UDP-N-acetyl-alpha-D-glucosamine binding. The Proton donor role is filled by C116. C116 is modified (2-(S-cysteinyl)pyruvic acid O-phosphothioketal). UDP-N-acetyl-alpha-D-glucosamine contacts are provided by residues R121–Q125, D304, and I326.

This sequence belongs to the EPSP synthase family. MurA subfamily.

It localises to the cytoplasm. The catalysed reaction is phosphoenolpyruvate + UDP-N-acetyl-alpha-D-glucosamine = UDP-N-acetyl-3-O-(1-carboxyvinyl)-alpha-D-glucosamine + phosphate. It participates in cell wall biogenesis; peptidoglycan biosynthesis. Cell wall formation. Adds enolpyruvyl to UDP-N-acetylglucosamine. This is UDP-N-acetylglucosamine 1-carboxyvinyltransferase from Paraburkholderia xenovorans (strain LB400).